Reading from the N-terminus, the 270-residue chain is Putative phosphoenolpyruvate synthase regulatory protein (270 aa).

Residue 150-157 (GVSRCGKT) coordinates ADP.

It belongs to the pyruvate, phosphate/water dikinase regulatory protein family. PSRP subfamily.

The enzyme catalyses [pyruvate, water dikinase] + ADP = [pyruvate, water dikinase]-phosphate + AMP + H(+). It catalyses the reaction [pyruvate, water dikinase]-phosphate + phosphate + H(+) = [pyruvate, water dikinase] + diphosphate. Bifunctional serine/threonine kinase and phosphorylase involved in the regulation of the phosphoenolpyruvate synthase (PEPS) by catalyzing its phosphorylation/dephosphorylation. This Aeromonas salmonicida (strain A449) protein is Putative phosphoenolpyruvate synthase regulatory protein.